Consider the following 416-residue polypeptide: Serine hydroxymethyltransferase (416 aa).

(6S)-5,6,7,8-tetrahydrofolate contacts are provided by residues leucine 121 and 125 to 127 (GHL). At lysine 229 the chain carries N6-(pyridoxal phosphate)lysine.

The protein belongs to the SHMT family. Homodimer. It depends on pyridoxal 5'-phosphate as a cofactor.

It localises to the cytoplasm. The catalysed reaction is (6R)-5,10-methylene-5,6,7,8-tetrahydrofolate + glycine + H2O = (6S)-5,6,7,8-tetrahydrofolate + L-serine. Its pathway is one-carbon metabolism; tetrahydrofolate interconversion. It participates in amino-acid biosynthesis; glycine biosynthesis; glycine from L-serine: step 1/1. Its function is as follows. Catalyzes the reversible interconversion of serine and glycine with tetrahydrofolate (THF) serving as the one-carbon carrier. This reaction serves as the major source of one-carbon groups required for the biosynthesis of purines, thymidylate, methionine, and other important biomolecules. Also exhibits THF-independent aldolase activity toward beta-hydroxyamino acids, producing glycine and aldehydes, via a retro-aldol mechanism. The chain is Serine hydroxymethyltransferase from Neisseria gonorrhoeae (strain NCCP11945).